Reading from the N-terminus, the 380-residue chain is O-phospho-L-seryl-tRNA:Cys-tRNA synthase (380 aa).

Pyridoxal 5'-phosphate contacts are provided by residues 86-87 (AR), N192, and 215-217 (SGH). K218 is subject to N6-(pyridoxal phosphate)lysine.

It belongs to the SepCysS family. Homodimer. Interacts with SepRS. Pyridoxal 5'-phosphate is required as a cofactor.

The enzyme catalyses O-phospho-L-seryl-tRNA(Cys) + hydrogen sulfide + H(+) = L-cysteinyl-tRNA(Cys) + phosphate. Converts O-phospho-L-seryl-tRNA(Cys) (Sep-tRNA(Cys)) to L-cysteinyl-tRNA(Cys) (Cys-tRNA(Cys)). The protein is O-phospho-L-seryl-tRNA:Cys-tRNA synthase of Methanococcus maripaludis (strain C6 / ATCC BAA-1332).